Here is a 159-residue protein sequence, read N- to C-terminus: Ecotin (159 aa).

Positions methionine 1 to alanine 22 are cleaved as a signal peptide. A disulfide bridge links cysteine 68 with cysteine 105.

This sequence belongs to the protease inhibitor I11 (ecotin) family. As to quaternary structure, homodimer.

The protein localises to the periplasm. In terms of biological role, general inhibitor of family S1 serine proteases. The polypeptide is Ecotin (Pseudomonas putida (strain W619)).